The primary structure comprises 159 residues: RNA pyrophosphohydrolase (159 aa).

A Nudix hydrolase domain is found at 6–149 (GYRPNVGIVI…KRNVYRRMMK (144 aa)). The short motif at 38 to 59 (GGINSGETAEQAMFRELFEEVG) is the Nudix box element.

Belongs to the Nudix hydrolase family. RppH subfamily. The cofactor is a divalent metal cation.

Accelerates the degradation of transcripts by removing pyrophosphate from the 5'-end of triphosphorylated RNA, leading to a more labile monophosphorylated state that can stimulate subsequent ribonuclease cleavage. This chain is RNA pyrophosphohydrolase, found in Baumannia cicadellinicola subsp. Homalodisca coagulata.